The chain runs to 497 residues: MLQTKPYTFWFITGSQHLYGEDAIEQVRQHSQTMVEKLNKIGELPYTIELKEVLTTPDAIRKMVIAANSDDDCAGMITWMHTFSPAKMWINGLKQLKKPLLHLHTQFNREIPYDDIDMDFMNLNQSAHGDREYGHIGARLNISRKVIVGHWQNNDVQERLGAWMRTAAAFVDGHHLKVARFGDNMREVAVTEGDKVEAQIQFGWSITAFGIGDLVEKMKAVSEDEVRRLFDEYQELYRLSPSILEQDEVKAAVLEQAKMELALKEFLEEGGYTAFTTNFEDLHGMKQLPGLAVQRLMAEGYGFGGEGDWKTAALLRMMKIIADGKGTSFMEDYTYHLAEGNELVLGSHMLEICPTIAANQPEIQVHPLGIGGKEDPARLVFDGADGPALNASLIDLGHRFRLVVNEVEAIKPERDMPKLPVAKVLWKCKPSLSEATEAWIHAGGAHHTVFSFEVTPEQLYDWATLADIEVVFINDKTDVLQFQQQLQWNEAFRRLFK.

Mn(2+)-binding residues include E306, E331, H348, and H447.

It belongs to the arabinose isomerase family. Requires Mn(2+) as cofactor.

It catalyses the reaction beta-L-arabinopyranose = L-ribulose. The protein operates within carbohydrate degradation; L-arabinose degradation via L-ribulose; D-xylulose 5-phosphate from L-arabinose (bacterial route): step 1/3. Catalyzes the conversion of L-arabinose to L-ribulose. In Halalkalibacterium halodurans (strain ATCC BAA-125 / DSM 18197 / FERM 7344 / JCM 9153 / C-125) (Bacillus halodurans), this protein is L-arabinose isomerase.